The primary structure comprises 273 residues: Octanoyltransferase LipM (273 aa).

The BPL/LPL catalytic domain maps to 32–240 (GEIPPTLRFY…GFSEILNIEL (209 aa)). C142 serves as the catalytic Acyl-thioester intermediate.

The protein belongs to the octanoyltransferase LipM family. Monomer.

The catalysed reaction is octanoyl-[ACP] + L-lysyl-[protein] = N(6)-octanoyl-L-lysyl-[protein] + holo-[ACP] + H(+). It functions in the pathway protein modification; protein lipoylation via endogenous pathway; protein N(6)-(lipoyl)lysine from octanoyl-[acyl-carrier-protein]. Catalyzes the transfer of endogenously produced octanoic acid from octanoyl-acyl-carrier-protein onto the lipoyl domain of GcvH, an intermediate carrier during protein lipoylation. The polypeptide is Octanoyltransferase LipM (Oceanobacillus iheyensis (strain DSM 14371 / CIP 107618 / JCM 11309 / KCTC 3954 / HTE831)).